The following is a 380-amino-acid chain: Cytochrome b (380 aa).

A run of 4 helical transmembrane segments spans residues 34-54, 78-99, 114-134, and 179-199; these read FGSL…LLAM, WLIR…YMHI, WNTG…GYVL, and FFAL…IHLT. 2 residues coordinate heme b: H84 and H98. Positions 183 and 197 each coordinate heme b. H202 is a binding site for a ubiquinone. A run of 4 helical transmembrane segments spans residues 227–247, 289–309, 321–341, and 348–368; these read LKDI…ALFS, LGGV…PFLH, LSQS…WIGS, and FIII…ILFP.

The protein belongs to the cytochrome b family. The cytochrome bc1 complex contains 11 subunits: 3 respiratory subunits (MT-CYB, CYC1 and UQCRFS1), 2 core proteins (UQCRC1 and UQCRC2) and 6 low-molecular weight proteins (UQCRH/QCR6, UQCRB/QCR7, UQCRQ/QCR8, UQCR10/QCR9, UQCR11/QCR10 and a cleavage product of UQCRFS1). This cytochrome bc1 complex then forms a dimer. Heme b serves as cofactor.

The protein localises to the mitochondrion inner membrane. In terms of biological role, component of the ubiquinol-cytochrome c reductase complex (complex III or cytochrome b-c1 complex) that is part of the mitochondrial respiratory chain. The b-c1 complex mediates electron transfer from ubiquinol to cytochrome c. Contributes to the generation of a proton gradient across the mitochondrial membrane that is then used for ATP synthesis. The sequence is that of Cytochrome b (MT-CYB) from Oceanodroma tristrami (Tristram's storm-petrel).